An 80-amino-acid polypeptide reads, in one-letter code: Conotoxin Cl10.1 (80 aa).

The signal sequence occupies residues 1–20 (MTTLGMTMLVLLLLLPLATC). The propeptide occupies 21-36 (LGDGERSPWDSLLRAL).

Contains 4 disulfide bonds. Expressed by the venom duct.

It is found in the secreted. In Californiconus californicus (California cone), this protein is Conotoxin Cl10.1.